The following is a 372-amino-acid chain: Phospho-2-dehydro-3-deoxyheptonate aldolase, tyrosine-inhibited (372 aa).

This sequence belongs to the class-I DAHP synthase family.

The protein localises to the cytoplasm. The protein resides in the nucleus. It carries out the reaction D-erythrose 4-phosphate + phosphoenolpyruvate + H2O = 7-phospho-2-dehydro-3-deoxy-D-arabino-heptonate + phosphate. It functions in the pathway metabolic intermediate biosynthesis; chorismate biosynthesis; chorismate from D-erythrose 4-phosphate and phosphoenolpyruvate: step 1/7. Stereospecific condensation of phosphoenolpyruvate (PEP) and D-erythrose-4-phosphate (E4P) giving rise to 3-deoxy-D-arabino-heptulosonate-7-phosphate (DAHP). The protein is Phospho-2-dehydro-3-deoxyheptonate aldolase, tyrosine-inhibited (aro4) of Schizosaccharomyces pombe (strain 972 / ATCC 24843) (Fission yeast).